The primary structure comprises 310 residues: Acetylglutamate kinase (310 aa).

Substrate is bound by residues 76–77 (GG), Arg98, and Asn203.

Belongs to the acetylglutamate kinase family. ArgB subfamily.

The protein localises to the cytoplasm. It catalyses the reaction N-acetyl-L-glutamate + ATP = N-acetyl-L-glutamyl 5-phosphate + ADP. It participates in amino-acid biosynthesis; L-arginine biosynthesis; N(2)-acetyl-L-ornithine from L-glutamate: step 2/4. Functionally, catalyzes the ATP-dependent phosphorylation of N-acetyl-L-glutamate. The protein is Acetylglutamate kinase of Cutibacterium acnes (strain DSM 16379 / KPA171202) (Propionibacterium acnes).